The sequence spans 255 residues: Triosephosphate isomerase (255 aa).

Substrate is bound at residue 9 to 11 (NWK). The active-site Electrophile is the histidine 95. The active-site Proton acceptor is the glutamate 167. Substrate is bound by residues glycine 173, serine 212, and 233–234 (GG).

The protein belongs to the triosephosphate isomerase family. As to quaternary structure, homodimer.

The protein localises to the cytoplasm. The enzyme catalyses D-glyceraldehyde 3-phosphate = dihydroxyacetone phosphate. It functions in the pathway carbohydrate biosynthesis; gluconeogenesis. The protein operates within carbohydrate degradation; glycolysis; D-glyceraldehyde 3-phosphate from glycerone phosphate: step 1/1. Involved in the gluconeogenesis. Catalyzes stereospecifically the conversion of dihydroxyacetone phosphate (DHAP) to D-glyceraldehyde-3-phosphate (G3P). The polypeptide is Triosephosphate isomerase (Photorhabdus laumondii subsp. laumondii (strain DSM 15139 / CIP 105565 / TT01) (Photorhabdus luminescens subsp. laumondii)).